The primary structure comprises 105 residues: Large ribosomal subunit protein bL21 (105 aa).

Belongs to the bacterial ribosomal protein bL21 family. As to quaternary structure, part of the 50S ribosomal subunit. Contacts protein L20.

Its function is as follows. This protein binds to 23S rRNA in the presence of protein L20. This is Large ribosomal subunit protein bL21 from Rhizobium rhizogenes (strain K84 / ATCC BAA-868) (Agrobacterium radiobacter).